The primary structure comprises 582 residues: Tetratricopeptide repeat protein 24 (582 aa).

Residues 1–31 (MSSPNPEDVPRRPEPEPSSSNKKKKKRKWLR) are disordered. TPR repeat units lie at residues 36–69 (IQAL…ASKA), 79–112 (QACA…EKAQ), 117–150 (GDQC…YQPQ), 154–187 (GEAW…YAQE), 236–271 (GHLY…VPGE), 273–306 (ATVL…HGSV), 313–346 (GRSF…ARDS), and 353–386 (WQAC…CQKE). Disordered stretches follow at residues 418–481 (TSAP…RAGP) and 548–582 (VPNG…CTIV). The span at 441–454 (GSSTAGVQHRSSSG) shows a compositional bias: polar residues. Basic and acidic residues predominate over residues 462 to 472 (EGHQKKKEERS).

The protein is Tetratricopeptide repeat protein 24 (TTC24) of Homo sapiens (Human).